Consider the following 525-residue polypeptide: MFGSATANPPAQRNLPSGDGDGGAPDAQAPYLLEISHVSKGFPGVVALNDVQLRVRPGSVLALMGENGAGKSTLMKIIAGIYQPDAGEIRLRGKPVSFDTPLSALQAGIAMIHQELNLMPFMSIAENIWIGREQLNGLHMVDHREMHRCTAELLERLRIKLDPEELVGTLSIAERQMVEIAKAVSYNSDVLIMDEPTSAITETEVAHLFSIISDLRAQGKGIIYITHKMNEVFEIADEVAVFRDGAYIGLQRADSMDGDSLITMMVGRELTQLFPEREKPAGDVLLSVNRLSLNGIFKDVSFDLRAGEVLGIAGLMGSGRTNVAETLFGITPSDSGEVRFDGKTVHIGDPHQAIELGFALLTEDRKLTGLFPCLSVMENMEMAVLANYAGNGFVQQKALRSQCEDMCKKLRVKTPSLEQCIDTLSGGNQQKALLARWLMTNPKVLILDEPTRGIDVGAKVEIYRLISLLASEGMAVIMISSELPEVLGMSDRVMVMHEGEMMGILDRSEATQEKVMHLASGHKVH.

The span at 1–15 (MFGSATANPPAQRNL) shows a compositional bias: polar residues. A disordered region spans residues 1-23 (MFGSATANPPAQRNLPSGDGDGG). ABC transporter domains are found at residues 33–269 (LEIS…VGRE) and 279–523 (KPAG…SGHK). 65 to 72 (GENGAGKS) is a binding site for ATP.

This sequence belongs to the ABC transporter superfamily. Carbohydrate importer 2 (CUT2) (TC 3.A.1.2) family.

It is found in the cell inner membrane. It catalyses the reaction D-ribose(out) + ATP + H2O = D-ribose(in) + ADP + phosphate + H(+). The catalysed reaction is D-galactose(out) + ATP + H2O = D-galactose(in) + ADP + phosphate + H(+). In terms of biological role, part of an ABC transporter complex involved in carbohydrate import. Could be involved in ribose, galactose and/or methyl galactoside import. Responsible for energy coupling to the transport system. The polypeptide is Putative ribose/galactose/methyl galactoside import ATP-binding protein (Pseudomonas syringae pv. syringae (strain B728a)).